Consider the following 94-residue polypeptide: Large ribosomal subunit protein bL28 (94 aa).

This sequence belongs to the bacterial ribosomal protein bL28 family.

The chain is Large ribosomal subunit protein bL28 from Novosphingobium aromaticivorans (strain ATCC 700278 / DSM 12444 / CCUG 56034 / CIP 105152 / NBRC 16084 / F199).